The sequence spans 224 residues: Probable mitochondrial import inner membrane translocase subunit Tim17 4 (224 aa).

3 consecutive transmembrane segments (helical) span residues 16-36 (CGCAFMMGTMGGSLFQYLKGF), 60-80 (AIAGSFAIWGATFSTVDCVMV), and 115-135 (AFVGCLVLAMLEGAGAAVATI).

This sequence belongs to the Tim17/Tim22/Tim23 family. In terms of assembly, component of the TIM23 complex at least composed of Tim23, Tim17 (Tim17a1, Tim17a2 or Tim17b1) and a Tim50. The complex interacts with the Tim44 component of the PAM complex.

It is found in the mitochondrion inner membrane. Essential component of the TIM23 complex, a complex that mediates the translocation of transit peptide-containing proteins across the mitochondrial inner membrane. This Drosophila melanogaster (Fruit fly) protein is Probable mitochondrial import inner membrane translocase subunit Tim17 4 (Tim17a2).